Here is a 181-residue protein sequence, read N- to C-terminus: ATP-dependent protease subunit HslV (181 aa).

The active site involves Thr7. 3 residues coordinate Na(+): Ala166, Cys169, and Thr172.

The protein belongs to the peptidase T1B family. HslV subfamily. A double ring-shaped homohexamer of HslV is capped on each side by a ring-shaped HslU homohexamer. The assembly of the HslU/HslV complex is dependent on binding of ATP.

The protein localises to the cytoplasm. It catalyses the reaction ATP-dependent cleavage of peptide bonds with broad specificity.. Allosterically activated by HslU binding. In terms of biological role, protease subunit of a proteasome-like degradation complex believed to be a general protein degrading machinery. This chain is ATP-dependent protease subunit HslV, found in Anaeromyxobacter dehalogenans (strain 2CP-1 / ATCC BAA-258).